The primary structure comprises 286 residues: D-tagatose-1,6-bisphosphate aldolase subunit KbaY (286 aa).

Asp82 serves as the catalytic Proton donor. Positions 83 and 180 each coordinate Zn(2+). Gly181 lines the dihydroxyacetone phosphate pocket. His208 is a binding site for Zn(2+). Dihydroxyacetone phosphate is bound by residues 209 to 211 (GAS) and 230 to 233 (NVAT).

It belongs to the class II fructose-bisphosphate aldolase family. TagBP aldolase KbaY subfamily. Homotetramer. Forms a complex with KbaZ. It depends on Zn(2+) as a cofactor.

It carries out the reaction D-tagatofuranose 1,6-bisphosphate = D-glyceraldehyde 3-phosphate + dihydroxyacetone phosphate. It participates in carbohydrate metabolism; D-tagatose 6-phosphate degradation; D-glyceraldehyde 3-phosphate and glycerone phosphate from D-tagatose 6-phosphate: step 2/2. Catalytic subunit of the tagatose-1,6-bisphosphate aldolase KbaYZ, which catalyzes the reversible aldol condensation of dihydroxyacetone phosphate (DHAP or glycerone-phosphate) with glyceraldehyde 3-phosphate (G3P) to produce tagatose 1,6-bisphosphate (TBP). Requires KbaZ subunit for full activity and stability. The sequence is that of D-tagatose-1,6-bisphosphate aldolase subunit KbaY from Escherichia coli O7:K1 (strain IAI39 / ExPEC).